Consider the following 522-residue polypeptide: Acetylcholine receptor subunit delta (522 aa).

Residues Met-1 to Gly-21 form the signal peptide. Residues Val-22–Lys-245 lie on the Extracellular side of the membrane. N-linked (GlcNAc...) asparagine glycosylation is found at Asn-91, Asn-164, and Asn-229. Cys-151 and Cys-165 are oxidised to a cystine. A run of 3 helical transmembrane segments spans residues Pro-246–Leu-270, Met-278–Thr-295, and Tyr-312–Phe-333. At His-334–Arg-476 the chain is on the cytoplasmic side. Tyr-393 is subject to Phosphotyrosine; by Tyr-kinases. The helical transmembrane segment at Leu-477 to Gly-497 threads the bilayer.

Belongs to the ligand-gated ion channel (TC 1.A.9) family. Acetylcholine receptor (TC 1.A.9.1) subfamily. Pentamer of two alpha chains, and one each of the beta, delta, and gamma chains.

It localises to the postsynaptic cell membrane. The protein resides in the cell membrane. The enzyme catalyses K(+)(in) = K(+)(out). The catalysed reaction is Na(+)(in) = Na(+)(out). After binding acetylcholine, the AChR responds by an extensive change in conformation that affects all subunits and leads to opening of an ion-conducting channel across the plasma membrane. In Tetronarce californica (Pacific electric ray), this protein is Acetylcholine receptor subunit delta (chrnd).